The chain runs to 436 residues: O-phosphoseryl-tRNA(Sec) selenium transferase (436 aa).

Residues 1-44 form a tetramerization region; sequence MLDFNIEGLIPKNMEKRGELVLNEYLKEIEDVFNHRKIPENGID. R72 contacts pyridoxal 5'-phosphate. The interval 93-103 is phosphate loop (P-loop); it reads GRSGNLVDPQP. Residues R94, S95, and Q102 each contribute to the substrate site. K278 is subject to N6-(pyridoxal phosphate)lysine. R307 provides a ligand contact to substrate.

This sequence belongs to the SepSecS family. Homotetramer. The cofactor is pyridoxal 5'-phosphate.

It catalyses the reaction O-phospho-L-seryl-tRNA(Sec) + selenophosphate + H2O = L-selenocysteinyl-tRNA(Sec) + 2 phosphate. Its pathway is aminoacyl-tRNA biosynthesis; selenocysteinyl-tRNA(Sec) biosynthesis; selenocysteinyl-tRNA(Sec) from L-seryl-tRNA(Sec) (archaeal/eukaryal route): step 2/2. In terms of biological role, converts O-phosphoseryl-tRNA(Sec) to selenocysteinyl-tRNA(Sec) required for selenoprotein biosynthesis. The polypeptide is O-phosphoseryl-tRNA(Sec) selenium transferase (spcS) (Methanococcus maripaludis (strain DSM 14266 / JCM 13030 / NBRC 101832 / S2 / LL)).